Here is a 56-residue protein sequence, read N- to C-terminus: Large ribosomal subunit protein eL37 (56 aa).

Zn(2+)-binding residues include cysteine 19, cysteine 22, cysteine 34, and cysteine 37. A C4-type zinc finger spans residues 19–37 (CRRCGSVSFNVHTKQCTSC).

Belongs to the eukaryotic ribosomal protein eL37 family. Zn(2+) is required as a cofactor.

Its function is as follows. Binds to the 23S rRNA. This is Large ribosomal subunit protein eL37 (rpl37e) from Methanosarcina acetivorans (strain ATCC 35395 / DSM 2834 / JCM 12185 / C2A).